Reading from the N-terminus, the 349-residue chain is RxLR effector protein CRE15 (349 aa).

Positions 1–33 (MITFKRLSSARWGALLTSIAVLFFLAITKGADA) are cleaved as a signal peptide. The RxLR-dEER motif lies at 46-62 (RRLRTTTADAYYASEDR).

This sequence belongs to the RxLR effector family. In terms of assembly, interacts directly with the potato ortholog of vascular highway 1 (VH1)-interacting kinase (VIK), encoding a predicted MEK kinase (MAP3K).

It localises to the secreted. The protein resides in the host cell membrane. In terms of biological role, effector that promotes P.infestans virulence in Nicotiana benthamiana and potato. Attenuates cell death triggered by the pathogen-associated molecular pattern infestin 1 (INF1), indicating that the effector suppresses pattern-triggered immunity. However, it does not attenuate cell death triggered by a range of resistance proteins, suggesting that it specifically suppresses INF1-triggered cell death (ICD). Targets host MAP3K VIK in order to utilize or promote its ability to negatively regulate immunity. This chain is RxLR effector protein CRE15, found in Phytophthora infestans (strain T30-4) (Potato late blight agent).